Reading from the N-terminus, the 261-residue chain is MSLPGSFDLTPEDAKLLLAANVHLGSKNVQVHNKPYVYKTRPDGVNVINVGKTWEKIVLAARIIAAIPNAADVAVCSTRTFGQRAVLKFAAHTGATPIAGRFTPGNFTNYITRSFKEPRLVVVTDPRTDFQAIKESSYVNIPVIALTDMDSPSEYVDVAIPCNNKGKHSIGLIWWLVAREVLRLRGIIPDRTTEWSVMPDLYFYRDPEEIEQNATEDIKTDDVEEAPAADAETEWTGETEEVDWAESGATPAAEEAAASNW.

Residue Ser2 is modified to N-acetylserine. The segment at 214-261 (ATEDIKTDDVEEAPAADAETEWTGETEEVDWAESGATPAAEEAAASNW) is disordered. A compositionally biased stretch (acidic residues) spans 222–244 (DVEEAPAADAETEWTGETEEVDW). Over residues 245 to 261 (AESGATPAAEEAAASNW) the composition is skewed to low complexity.

Belongs to the universal ribosomal protein uS2 family. As to quaternary structure, component of the small ribosomal subunit. Mature ribosomes consist of a small (40S) and a large (60S) subunit. The 40S subunit contains about 33 different proteins and 1 molecule of RNA (18S). The 60S subunit contains about 49 different proteins and 3 molecules of RNA (25S, 5.8S and 5S). Interacts with RPS21.

The protein resides in the cytoplasm. Required for the assembly and/or stability of the 40S ribosomal subunit. Required for the processing of the 20S rRNA-precursor to mature 18S rRNA in a late step of the maturation of 40S ribosomal subunits. In Debaryomyces hansenii (strain ATCC 36239 / CBS 767 / BCRC 21394 / JCM 1990 / NBRC 0083 / IGC 2968) (Yeast), this protein is Small ribosomal subunit protein uS2.